The primary structure comprises 175 residues: ADP-ribosylation factor 6 (175 aa).

The N-myristoyl glycine moiety is linked to residue G2. K3 is lipidated: N6-myristoyl lysine. Residues 23 to 28 (AAGKTT), 41 to 44 (TIPT), 63 to 67 (DVGGQ), 122 to 125 (NKQD), and 155 to 156 (CA) each bind GTP.

It belongs to the small GTPase superfamily. Arf family.

It is found in the cytoplasm. The protein resides in the cytosol. It localises to the cell membrane. Its subcellular location is the endosome membrane. The protein localises to the recycling endosome membrane. It is found in the cell projection. The protein resides in the filopodium membrane. It localises to the ruffle. Its subcellular location is the cleavage furrow. The protein localises to the midbody. It is found in the midbody ring. The protein resides in the golgi apparatus. The catalysed reaction is GTP + H2O = GDP + phosphate + H(+). GTP-binding protein involved in protein trafficking; regulates endocytic recycling and cytoskeleton remodeling. May modulate vesicle budding and uncoating within the Golgi apparatus. May contribute to the regulation of dendritic branching, filopodia extension and dendritic spine development. The protein is ADP-ribosylation factor 6 (arf6) of Xenopus laevis (African clawed frog).